We begin with the raw amino-acid sequence, 657 residues long: Broad substrate specificity ATP-binding cassette transporter ABCG2 (657 aa).

Residues 1–24 are disordered; the sequence is MSSSNDHVLVPMSQRNNNGLPRTN. Residues 1–393 lie on the Cytoplasmic side of the membrane; that stretch reads MSSSNDHVLV…SFKNLLGNPQ (393 aa). Polar residues predominate over residues 13 to 24; it reads SQRNNNGLPRTN. The 238-residue stretch at 48-285 folds into the ABC transporter domain; it reads VKSGFLVRKT…FASAGYHCEP (238 aa). ATP is bound by residues 79 to 86, 183 to 189, Glu-210, and His-242; these read GPTGGGKS and RGISGGE. Residues 389–653 form the ABC transmembrane type-2 domain; the sequence is LGNPQASVAQ…TIAYLKLLFL (265 aa). The chain crosses the membrane as a helical span at residues 394–414; that stretch reads ASVAQLIVTVILGLIIGAIYF. Topologically, residues 415–428 are extracellular; sequence DLKYDAAGMQNRAG. A helical membrane pass occupies residues 429 to 449; sequence VLFFLTTNQCFSSVSAVELFV. Residues 450–477 lie on the Cytoplasmic side of the membrane; the sequence is VEKKLFIHEYISGYYRVSSYFFGKVMSD. Residues 478-498 traverse the membrane as a helical segment; that stretch reads LLPMRFLPSVIFTCVLYFMLG. Residues 499-506 lie on the Extracellular side of the membrane; the sequence is LKKTVDAF. The chain crosses the membrane as a helical span at residues 507–527; it reads FIMMFTLIMVAYTASSMALAI. At 528–535 the chain is on the cytoplasmic side; sequence ATGQSVVS. A helical membrane pass occupies residues 536-556; the sequence is VATLLMTIAFVFMMLFSGLLV. Over 557-632 the chain is Extracellular; that stretch reads NLRTIGPWLS…LSPWGLWKNH (76 aa). A disulfide bridge connects residues Cys-592 and Cys-610. Residues Asn-596 and Asn-600 are each glycosylated (N-linked (GlcNAc...) asparagine). A helical transmembrane segment spans residues 633 to 653; that stretch reads VALACMIIIFLTIAYLKLLFL. At 654 to 657 the chain is on the cytoplasmic side; the sequence is KKYS.

Belongs to the ABC transporter superfamily. ABCG family. Eye pigment precursor importer (TC 3.A.1.204) subfamily. As to quaternary structure, homodimer; disulfide-linked. The minimal functional unit is a homodimer, but the major oligomeric form in plasma membrane is a homotetramer with possibility of higher order oligomerization up to homododecamers. Post-translationally, N-glycosylated. Glycosylation-deficient ABCG2 is normally expressed and functional. In terms of processing, phosphorylated. Phosphorylation may regulate the localization to the plasma membrane, the homooligomerization and therefore, the activity of the transporter. Highly expressed in kidney. Lower expression in liver, colon, heart, spleen, and placenta. Expressed in mammary gland. Expressed in intestinal villi and renal proximal tubules, hepatic bile canalicular membranes, and placental labyrinth cells (at protein level).

The protein localises to the cell membrane. Its subcellular location is the apical cell membrane. It is found in the mitochondrion membrane. It carries out the reaction ATP + H2O + xenobioticSide 1 = ADP + phosphate + xenobioticSide 2.. The enzyme catalyses riboflavin(in) + ATP + H2O = riboflavin(out) + ADP + phosphate + H(+). The catalysed reaction is pheophorbide a(in) + ATP + H2O = pheophorbide a(out) + ADP + phosphate + H(+). It catalyses the reaction urate(in) + ATP + H2O = urate(out) + ADP + phosphate + H(+). It carries out the reaction indoxyl sulfate(in) + ATP + H2O = indoxyl sulfate(out) + ADP + phosphate + H(+). The enzyme catalyses sphing-4-enine 1-phosphate(in) + ATP + H2O = sphing-4-enine 1-phosphate(out) + ADP + phosphate + H(+). The catalysed reaction is estrone 3-sulfate(in) + ATP + H2O = estrone 3-sulfate(out) + ADP + phosphate + H(+). It catalyses the reaction dehydroepiandrosterone 3-sulfate(in) + ATP + H2O = dehydroepiandrosterone 3-sulfate(out) + ADP + phosphate + H(+). It carries out the reaction 4-methylumbelliferone sulfate(in) + ATP + H2O = 4-methylumbelliferone sulfate(out) + ADP + phosphate + H(+). The enzyme catalyses 5,7-dimethyl-2-methylamino-4-(3-pyridylmethyl)-1,3-benzothiazol-6-yl beta-D-glucuronate(in) + ATP + H2O = 5,7-dimethyl-2-methylamino-4-(3-pyridylmethyl)-1,3-benzothiazol-6-yl beta-D-glucuronate(out) + ADP + phosphate + H(+). The catalysed reaction is 4-methylumbelliferone beta-D-glucuronate(in) + ATP + H2O = 4-methylumbelliferone beta-D-glucuronate(out) + ADP + phosphate + H(+). It catalyses the reaction 5,7-dimethyl-2-methylamino-4-(3-pyridylmethyl)-1,3-benzothiazol-6-yl sulfate(in) + ATP + H2O = 5,7-dimethyl-2-methylamino-4-(3-pyridylmethyl)-1,3-benzothiazol-6-yl sulfate(out) + ADP + phosphate + H(+). It carries out the reaction 17beta-estradiol 17-O-(beta-D-glucuronate)(in) + ATP + H2O = 17beta-estradiol 17-O-(beta-D-glucuronate)(out) + ADP + phosphate + H(+). The enzyme catalyses methotrexate(in) + ATP + H2O = methotrexate(out) + ADP + phosphate + H(+). The catalysed reaction is itaconate(in) + ATP + H2O = itaconate(out) + ADP + phosphate + H(+). With respect to regulation, specifically inhibited by the fungal toxin fumitremorgin C and Ko143. Functionally, broad substrate specificity ATP-dependent transporter of the ATP-binding cassette (ABC) family that actively extrudes a wide variety of physiological compounds, dietary toxins and xenobiotics from cells. Involved in porphyrin homeostasis, mediating the export of protoporphyrin IX (PPIX) from both mitochondria to cytosol and cytosol to extracellular space, it also functions in the cellular export of heme. Also mediates the efflux of sphingosine-1-P from cells. Acts as a urate exporter functioning in both renal and extrarenal urate excretion. In kidney, it also functions as a physiological exporter of the uremic toxin indoxyl sulfate. Also involved in the excretion of steroids like estrone 3-sulfate/E1S, 3beta-sulfooxy-androst-5-en-17-one/DHEAS, and other sulfate conjugates. Mediates the secretion of the riboflavin and biotin vitamins into milk. Extrudes pheophorbide a, a phototoxic porphyrin catabolite of chlorophyll, reducing its bioavailability. Plays an important role in the exclusion of xenobiotics from the brain. It confers to cells a resistance to multiple drugs and other xenobiotics including mitoxantrone, pheophorbide, camptothecin, methotrexate, azidothymidine, and the anthracyclines daunorubicin and doxorubicin, through the control of their efflux. In placenta, it limits the penetration of drugs from the maternal plasma into the fetus. May play a role in early stem cell self-renewal by blocking differentiation. In inflammatory macrophages, exports itaconate from the cytosol to the extracellular compartment and limits the activation of TFEB-dependent lysosome biogenesis involved in antibacterial innate immune response. This chain is Broad substrate specificity ATP-binding cassette transporter ABCG2 (Abcg2), found in Mus musculus (Mouse).